The chain runs to 36 residues: MTGSYLPSILVPLVGIIFPGISMALLFIYIEEENIS.

Residues 7-29 form a helical membrane-spanning segment; sequence PSILVPLVGIIFPGISMALLFIY.

It belongs to the PsaI family.

It localises to the plastid. The protein localises to the chloroplast thylakoid membrane. In terms of biological role, may help in the organization of the PsaL subunit. This is Photosystem I reaction center subunit VIII from Gracilaria tenuistipitata var. liui (Red alga).